We begin with the raw amino-acid sequence, 404 residues long: Probable eukaryotic initiation factor 4A (404 aa).

Positions 1 to 28 (MAQQGKVEPQDQDSFLDDQPGIRPIPSF) are disordered. The short motif at 26–54 (PSFDDMPLHQNLLRGIYSHGFEKPSSIQQ) is the Q motif element. One can recognise a Helicase ATP-binding domain in the interval 57–231 (IVPFTRGGDI…KKFMRDPTRI (175 aa)). Residue 70-77 (AQSGTGKT) participates in ATP binding. A DEAD box motif is present at residues 179-182 (DEAD). A Helicase C-terminal domain is found at 242–402 (GIKQYFIAVE…ELPVDFAAYL (161 aa)).

The protein belongs to the DEAD box helicase family. eIF4A subfamily. As to quaternary structure, eIF4F is a multi-subunit complex, the composition of which varies with external and internal environmental conditions. It is composed of at least EIF4A, EIF4E and EIF4G.

The enzyme catalyses ATP + H2O = ADP + phosphate + H(+). ATP-dependent RNA helicase which is a subunit of the eIF4F complex involved in cap recognition and is required for mRNA binding to ribosome. In the current model of translation initiation, eIF4A unwinds RNA secondary structures in the 5'-UTR of mRNAs which is necessary to allow efficient binding of the small ribosomal subunit, and subsequent scanning for the initiator codon. In Trypanosoma cruzi (strain CL Brener), this protein is Probable eukaryotic initiation factor 4A.